A 108-amino-acid polypeptide reads, in one-letter code: Ig kappa chain V region GOM (108 aa).

The segment at 1 to 23 is framework-1; it reads DIVMTQTPLSLSVSPGEPASISC. Cysteine 23 and cysteine 88 are disulfide-bonded. Residues 24 to 34 are complementarity-determining-1; the sequence is RSSQSNLDYLN. The segment at 35-49 is framework-2; the sequence is WYLQKAGQSPRLLPE. The segment at 44-66 is disordered; the sequence is PRLLPEQDSQRASGVPDRFSGSG. The tract at residues 50-56 is complementarity-determining-2; that stretch reads QDSQRAS. Residues 57–88 are framework-3; sequence GVPDRFSGSGSGTDFTLRIGRVEAEDAGIYYC. The segment at 89–97 is complementarity-determining-3; sequence MQRSFYPYT. Residues 98-107 are framework-4; sequence FGQGTRLEVR.

This Canis lupus familiaris (Dog) protein is Ig kappa chain V region GOM.